A 545-amino-acid polypeptide reads, in one-letter code: CTP synthase (545 aa).

Residues 1–266 (MTTRYIFVTG…DELVVKRFGI (266 aa)) form an amidoligase domain region. Ser14 is a binding site for CTP. Ser14 serves as a coordination point for UTP. ATP contacts are provided by residues 15 to 20 (SLGKGI) and Asp72. Residues Asp72 and Glu140 each contribute to the Mg(2+) site. CTP is bound by residues 147–149 (DIE), 187–192 (KTKPTQ), and Lys223. Residues 187–192 (KTKPTQ) and Lys223 contribute to the UTP site. 239-241 (KDV) lines the ATP pocket. The region spanning 291-542 (TIGMVGKYIE…VAAATAYQKR (252 aa)) is the Glutamine amidotransferase type-1 domain. Gly352 serves as a coordination point for L-glutamine. Cys379 functions as the Nucleophile; for glutamine hydrolysis in the catalytic mechanism. Residues 380–383 (LGLQ), Glu403, and Arg470 each bind L-glutamine. Active-site residues include His515 and Glu517.

Belongs to the CTP synthase family. Homotetramer.

The catalysed reaction is UTP + L-glutamine + ATP + H2O = CTP + L-glutamate + ADP + phosphate + 2 H(+). It carries out the reaction L-glutamine + H2O = L-glutamate + NH4(+). The enzyme catalyses UTP + NH4(+) + ATP = CTP + ADP + phosphate + 2 H(+). It functions in the pathway pyrimidine metabolism; CTP biosynthesis via de novo pathway; CTP from UDP: step 2/2. Its activity is regulated as follows. Allosterically activated by GTP, when glutamine is the substrate; GTP has no effect on the reaction when ammonia is the substrate. The allosteric effector GTP functions by stabilizing the protein conformation that binds the tetrahedral intermediate(s) formed during glutamine hydrolysis. Inhibited by the product CTP, via allosteric rather than competitive inhibition. In terms of biological role, catalyzes the ATP-dependent amination of UTP to CTP with either L-glutamine or ammonia as the source of nitrogen. Regulates intracellular CTP levels through interactions with the four ribonucleotide triphosphates. The chain is CTP synthase from Shewanella sediminis (strain HAW-EB3).